We begin with the raw amino-acid sequence, 129 residues long: UPF0146 protein VNG_2609C (129 aa).

It belongs to the UPF0146 family.

The sequence is that of UPF0146 protein VNG_2609C from Halobacterium salinarum (strain ATCC 700922 / JCM 11081 / NRC-1) (Halobacterium halobium).